We begin with the raw amino-acid sequence, 591 residues long: Probable LRR receptor-like serine/threonine-protein kinase At1g69990 (591 aa).

The N-terminal stretch at 1–18 (MKTISIFFVIILMSSSHA) is a signal peptide. Residues 19-218 (EDDVLCLKGF…GKNLTIIVTA (200 aa)) lie on the Extracellular side of the membrane. N-linked (GlcNAc...) asparagine glycosylation is present at Asn46. 5 LRR repeats span residues 66-88 (RILS…LKLC), 90-111 (SLQS…QICS), 115-137 (YLVT…IVDC), 139-162 (FLNS…TRLN), and 163-185 (RLQR…LSHY). Asn211 carries an N-linked (GlcNAc...) asparagine glycan. The chain crosses the membrane as a helical span at residues 219–239 (GVIGAVGSLCVGFGMFWWFFI). Over 240-591 (RDRRKMNNYG…LIFNKQEHLK (352 aa)) the chain is Cytoplasmic. Phosphothreonine is present on Thr292. The Protein kinase domain occupies 295–573 (FDSGNIVVSS…KNLGDQHGFF (279 aa)). ATP-binding positions include 301 to 309 (VVSSRSGVS) and Lys323. Residue Ser378 is modified to Phosphoserine. A Phosphothreonine modification is found at Thr389. A Phosphotyrosine modification is found at Tyr463. Ser465 bears the Phosphoserine mark. Residue Thr466 is modified to Phosphothreonine. Ser470 bears the Phosphoserine mark.

It belongs to the protein kinase superfamily. Ser/Thr protein kinase family.

Its subcellular location is the membrane. It catalyses the reaction L-seryl-[protein] + ATP = O-phospho-L-seryl-[protein] + ADP + H(+). It carries out the reaction L-threonyl-[protein] + ATP = O-phospho-L-threonyl-[protein] + ADP + H(+). The protein is Probable LRR receptor-like serine/threonine-protein kinase At1g69990 of Arabidopsis thaliana (Mouse-ear cress).